We begin with the raw amino-acid sequence, 95 residues long: Protein TusB (95 aa).

Belongs to the DsrH/TusB family. As to quaternary structure, heterohexamer, formed by a dimer of trimers. The hexameric TusBCD complex contains 2 copies each of TusB, TusC and TusD. The TusBCD complex interacts with TusE.

It localises to the cytoplasm. In terms of biological role, part of a sulfur-relay system required for 2-thiolation of 5-methylaminomethyl-2-thiouridine (mnm(5)s(2)U) at tRNA wobble positions. This Serratia proteamaculans (strain 568) protein is Protein TusB.